The chain runs to 191 residues: Large ribosomal subunit protein uL6 (191 aa).

Belongs to the universal ribosomal protein uL6 family. In terms of assembly, component of the large ribosomal subunit. Mature ribosomes consist of a small (40S) and a large (60S) subunit. The 40S subunit contains about 32 different proteins and 1 molecule of RNA (18S). The 60S subunit contains 45 different proteins and 3 molecules of RNA (25S, 5.8S and 5S).

It localises to the cytoplasm. In terms of biological role, component of the ribosome, a large ribonucleoprotein complex responsible for the synthesis of proteins in the cell. The small ribosomal subunit (SSU) binds messenger RNAs (mRNAs) and translates the encoded message by selecting cognate aminoacyl-transfer RNA (tRNA) molecules. The large subunit (LSU) contains the ribosomal catalytic site termed the peptidyl transferase center (PTC), which catalyzes the formation of peptide bonds, thereby polymerizing the amino acids delivered by tRNAs into a polypeptide chain. The nascent polypeptides leave the ribosome through a tunnel in the LSU and interact with protein factors that function in enzymatic processing, targeting, and the membrane insertion of nascent chains at the exit of the ribosomal tunnel. This chain is Large ribosomal subunit protein uL6, found in Candida albicans (strain SC5314 / ATCC MYA-2876) (Yeast).